The sequence spans 638 residues: DEAD-box ATP-dependent RNA helicase 52B (638 aa).

Composition is skewed to low complexity over residues 1–21 (MRSS…AAAA) and 40–67 (GQAA…VGQP). A disordered region spans residues 1–129 (MRSSWADSAA…WDRRDREPDP (129 aa)). The segment covering 79 to 112 (VNGGGGGGGGSVGGSRQGFGAGGRGGGGGGGGGA) has biased composition (gly residues). The span at 119–128 (GWDRRDREPD) shows a compositional bias: basic and acidic residues. The short motif at 169 to 197 (NTFAEIDLGDALNENIRRCKYVKPTPVQR) is the Q motif element. Positions 200–384 (IPISIAGRDL…SDFLADYIFL (185 aa)) constitute a Helicase ATP-binding domain. Residue 213–220 (AQTGSGKT) coordinates ATP. Positions 328–331 (DEAD) match the DEAD box motif. Residues 411-562 (YLMDLLHAQR…EVPQWLERYA (152 aa)) enclose the Helicase C-terminal domain. The disordered stretch occupies residues 565–638 (SSFGGGGGRN…GGQGFSSAWD (74 aa)). The segment covering 567 to 583 (FGGGGGRNRRSGGGARF) has biased composition (gly residues). Over residues 584–593 (GGRDFRRDRG) the composition is skewed to basic and acidic residues. A compositionally biased stretch (gly residues) spans 594–632 (SGGGGYGGGGGGYGGGGYGGGGGGGGYGGGSSYGGGGQG).

Belongs to the DEAD box helicase family. DDX3/DED1 subfamily.

The catalysed reaction is ATP + H2O = ADP + phosphate + H(+). This is DEAD-box ATP-dependent RNA helicase 52B (PL10B) from Oryza sativa subsp. japonica (Rice).